A 728-amino-acid polypeptide reads, in one-letter code: Catalase-peroxidase (728 aa).

An N-terminal signal peptide occupies residues 1 to 16; the sequence is MDNPTDSAGKCPVAHG. Residues 1-26 form a disordered region; sequence MDNPTDSAGKCPVAHGNTPRSRSNRD. Positions 96-218 form a cross-link, tryptophyl-tyrosyl-methioninium (Trp-Tyr) (with M-244); it reads WHSAGTYRIT…LGAVQMGFIY (123 aa). The active-site Proton acceptor is the His97. The segment at residues 218 to 244 is a cross-link (tryptophyl-tyrosyl-methioninium (Tyr-Met) (with W-96)); it reads YVNPEGPNGNSDPLASARDIRETFARM. His259 provides a ligand contact to heme b.

This sequence belongs to the peroxidase family. Peroxidase/catalase subfamily. Homodimer or homotetramer. It depends on heme b as a cofactor. Formation of the three residue Trp-Tyr-Met cross-link is important for the catalase, but not the peroxidase activity of the enzyme.

The enzyme catalyses H2O2 + AH2 = A + 2 H2O. It catalyses the reaction 2 H2O2 = O2 + 2 H2O. Its function is as follows. Bifunctional enzyme with both catalase and broad-spectrum peroxidase activity. This Rhizobium leguminosarum bv. phaseoli protein is Catalase-peroxidase.